The chain runs to 752 residues: F-box and WD repeat domain containing protein 10B (752 aa).

6 WD repeats span residues 169–206 (GLNQ…TSLP), 451–490 (GHAG…CTRI), 493–532 (GHQG…KTFR), 534–569 (KDPI…LVKT), 572–609 (GHEG…ERCL), and 611–652 (AFKH…KVIK).

In terms of tissue distribution, expressed in pancreas, heart and skeletal muscle.

In Homo sapiens (Human), this protein is F-box and WD repeat domain containing protein 10B.